Here is a 185-residue protein sequence, read N- to C-terminus: Pro-adrenomedullin (185 aa).

A signal peptide spans 1 to 21 (MKLVSVALMYLGSLAFLGADT). R41 carries the post-translational modification Arginine amide. A propeptide spanning residues 45–92 (ELRMSSSYPTGLADVKAGPAQTLIRPQDMKGASRSPEDSSPDAARIRV) is cleaved from the precursor. Positions 60-87 (KAGPAQTLIRPQDMKGASRSPEDSSPDA) are disordered. A disulfide bridge links C110 with C115. The segment at 133–185 (DNVAPRSKISPQGYGRRRRRSLPEAGPGRTLVSSKPQAHGAPAPPSGSAPHFL) is disordered. Residue Y146 is modified to Tyrosine amide. Positions 148–185 (RRRRRSLPEAGPGRTLVSSKPQAHGAPAPPSGSAPHFL) are cleaved as a propeptide — preproAM C-terminal fragment.

Belongs to the adrenomedullin family. In terms of tissue distribution, highest levels found in pheochromocytoma and adrenal medulla. Also found in lung, ventricle and kidney tissues.

The protein localises to the secreted. Adrenomedullin/ADM and proadrenomedullin N-20 terminal peptide/PAMP are peptide hormones that act as potent hypotensive and vasodilatator agents. Numerous actions have been reported most related to the physiologic control of fluid and electrolyte homeostasis. In the kidney, ADM is diuretic and natriuretic, and both ADM and PAMP inhibit aldosterone secretion by direct adrenal actions. In pituitary gland, both peptides at physiologically relevant doses inhibit basal ACTH secretion. Both peptides appear to act in brain and pituitary gland to facilitate the loss of plasma volume, actions which complement their hypotensive effects in blood vessels. Its function is as follows. ADM function is mediated by the CALCRL-RAMP2 and CALCRL-RAMP3 receptor complexes with ADM showing the highest potency for the CALCRL-RAMP2 complex. This is Pro-adrenomedullin from Homo sapiens (Human).